A 298-amino-acid chain; its full sequence is DDRGK domain-containing protein 1 (298 aa).

Residues M1–E2 are Lumenal-facing. Residues E3–W23 form a helical membrane-spanning segment. Topologically, residues K24–S298 are cytoplasmic. The segment at S31–E155 is disordered. Residues K101–E155 show a composition bias toward basic and acidic residues.

It belongs to the DDRGK1 family.

It localises to the endoplasmic reticulum membrane. Functionally, substrate adapter for ufmylation, the covalent attachment of the ubiquitin-like modifier UFM1 to substrate proteins. This Arabidopsis thaliana (Mouse-ear cress) protein is DDRGK domain-containing protein 1.